A 118-amino-acid polypeptide reads, in one-letter code: Hydrogenase maturation factor HypA (118 aa).

Ni(2+) is bound at residue histidine 2. Zn(2+) is bound by residues cysteine 73, cysteine 76, cysteine 90, and cysteine 93.

Belongs to the HypA/HybF family.

In terms of biological role, involved in the maturation of [NiFe] hydrogenases. Required for nickel insertion into the metal center of the hydrogenase. The polypeptide is Hydrogenase maturation factor HypA (Salmonella typhi).